We begin with the raw amino-acid sequence, 392 residues long: FK506-binding protein 4 (392 aa).

Disordered regions lie at residues 58-116 (NPEL…NEID) and 161-284 (GNYV…PKTK). Composition is skewed to acidic residues over residues 73–86 (DGLE…EQEA), 104–116 (SESE…NEID), and 172–219 (SDSD…DASD). A phosphoserine mark is found at serine 80 and serine 82. Basic and acidic residues-rich tracts occupy residues 220–234 (IESR…DEKK) and 252–279 (SAKP…ESKP). The PPIase FKBP-type domain occupies 306 to 392 (GTRVGMRYVG…TFDVKLVSMK (87 aa)).

Belongs to the FKBP-type PPIase family. FKBP3/4 subfamily. Binds to histones H3 and H4. Interacts with NOP53.

It localises to the nucleus. The catalysed reaction is [protein]-peptidylproline (omega=180) = [protein]-peptidylproline (omega=0). Its function is as follows. PPIase that acts as a histone chaperone. Histone proline isomerase that increases the rate of cis-trans isomerization at 'Pro-17' (H3P16), 'Pro-31' (H3P30) and 'Pro-39 (H3P38) on the histone H3 N-terminal tail. H3P16 and H3P30 are the major proline targets with little activity shown against H3P38. H3P38 isomerization influences SET2-mediated H3K36 methylation thereby regulating gene expression. This chain is FK506-binding protein 4, found in Saccharomyces cerevisiae (strain ATCC 204508 / S288c) (Baker's yeast).